The primary structure comprises 151 residues: UPF0208 membrane protein NT01EI_2692 (151 aa).

Helical transmembrane passes span 46-65 and 69-91; these read FAIRFMPPIAMFTLCWQIAL and LGPAIATALFACSLPMQGLWWLG.

It belongs to the UPF0208 family.

Its subcellular location is the cell inner membrane. This chain is UPF0208 membrane protein NT01EI_2692, found in Edwardsiella ictaluri (strain 93-146).